The following is a 586-amino-acid chain: Clathrin heavy chain linker domain-containing protein 1 (586 aa).

Positions 174-232 form a coiled coil; that stretch reads MNLDALTKYMKHLEDKYAEIKQAMLIKYVPAQRKSDLDEEMIVLLKRRDVAENLNRKLQ.

In Macaca fascicularis (Crab-eating macaque), this protein is Clathrin heavy chain linker domain-containing protein 1 (CLHC1).